We begin with the raw amino-acid sequence, 526 residues long: Peptide chain release factor 3 (526 aa).

A tr-type G domain is found at 11–277; sequence SKRRTFAIIS…SLIKWAPSPL (267 aa). Residues 20–27, 88–92, and 142–145 each bind GTP; these read SHPDAGKT, DTPGH, and NKLD.

This sequence belongs to the TRAFAC class translation factor GTPase superfamily. Classic translation factor GTPase family. PrfC subfamily.

Its subcellular location is the cytoplasm. In terms of biological role, increases the formation of ribosomal termination complexes and stimulates activities of RF-1 and RF-2. It binds guanine nucleotides and has strong preference for UGA stop codons. It may interact directly with the ribosome. The stimulation of RF-1 and RF-2 is significantly reduced by GTP and GDP, but not by GMP. This chain is Peptide chain release factor 3, found in Buchnera aphidicola subsp. Acyrthosiphon pisum (strain Tuc7).